We begin with the raw amino-acid sequence, 377 residues long: tRNA-specific 2-thiouridylase MnmA (377 aa).

ATP contacts are provided by residues Ala9–Ser16 and Leu35. Cys105 acts as the Nucleophile in catalysis. A disulfide bridge links Cys105 with Cys201. Position 129 (Gly129) interacts with ATP. Residues Lys151–Gln153 form an interaction with tRNA region. Cys201 functions as the Cysteine persulfide intermediate in the catalytic mechanism. The interval Arg307–Tyr308 is interaction with tRNA.

It belongs to the MnmA/TRMU family.

The protein localises to the cytoplasm. The enzyme catalyses S-sulfanyl-L-cysteinyl-[protein] + uridine(34) in tRNA + AH2 + ATP = 2-thiouridine(34) in tRNA + L-cysteinyl-[protein] + A + AMP + diphosphate + H(+). Catalyzes the 2-thiolation of uridine at the wobble position (U34) of tRNA, leading to the formation of s(2)U34. The polypeptide is tRNA-specific 2-thiouridylase MnmA (Leptospira borgpetersenii serovar Hardjo-bovis (strain JB197)).